The primary structure comprises 318 residues: NADH-ubiquinone oxidoreductase chain 1 (318 aa).

A run of 8 helical transmembrane segments spans residues 2–22 (FMAN…FLTL), 69–89 (MLYL…WTPL), 98–118 (FNLG…SILW), 140–160 (ISYE…SGSF), 171–191 (HSWL…STLA), 222–242 (LFFM…TTIF), 253–273 (ETYS…FLWI), and 285–305 (LMHL…MWYI).

It belongs to the complex I subunit 1 family. In terms of assembly, core subunit of respiratory chain NADH dehydrogenase (Complex I) which is composed of 45 different subunits.

The protein localises to the mitochondrion inner membrane. It carries out the reaction a ubiquinone + NADH + 5 H(+)(in) = a ubiquinol + NAD(+) + 4 H(+)(out). In terms of biological role, core subunit of the mitochondrial membrane respiratory chain NADH dehydrogenase (Complex I) which catalyzes electron transfer from NADH through the respiratory chain, using ubiquinone as an electron acceptor. Essential for the catalytic activity and assembly of complex I. In Saguinus leucopus (Silvery-brown bare-face tamarin), this protein is NADH-ubiquinone oxidoreductase chain 1 (MT-ND1).